Reading from the N-terminus, the 430-residue chain is Serine--tRNA ligase (430 aa).

237 to 239 is an L-serine binding site; that stretch reads TAE. ATP is bound at residue 268-270; it reads RSE. E291 is a binding site for L-serine. Position 355–358 (355–358) interacts with ATP; the sequence is EISS. S391 provides a ligand contact to L-serine.

This sequence belongs to the class-II aminoacyl-tRNA synthetase family. Type-1 seryl-tRNA synthetase subfamily. As to quaternary structure, homodimer. The tRNA molecule binds across the dimer.

The protein resides in the cytoplasm. The enzyme catalyses tRNA(Ser) + L-serine + ATP = L-seryl-tRNA(Ser) + AMP + diphosphate + H(+). The catalysed reaction is tRNA(Sec) + L-serine + ATP = L-seryl-tRNA(Sec) + AMP + diphosphate + H(+). Its pathway is aminoacyl-tRNA biosynthesis; selenocysteinyl-tRNA(Sec) biosynthesis; L-seryl-tRNA(Sec) from L-serine and tRNA(Sec): step 1/1. In terms of biological role, catalyzes the attachment of serine to tRNA(Ser). Is also able to aminoacylate tRNA(Sec) with serine, to form the misacylated tRNA L-seryl-tRNA(Sec), which will be further converted into selenocysteinyl-tRNA(Sec). The polypeptide is Serine--tRNA ligase (Citrobacter koseri (strain ATCC BAA-895 / CDC 4225-83 / SGSC4696)).